The following is a 155-amino-acid chain: Xanthine-guanine phosphoribosyltransferase (155 aa).

5-phospho-alpha-D-ribose 1-diphosphate contacts are provided by residues 37-38 and 91-99; these read RG and DDLVDTGNT. D92 contributes to the Mg(2+) binding site. Residues D95 and I138 each coordinate guanine. Residues D95 and I138 each coordinate xanthine. Residues 95-99 and 137-138 each bind GMP; these read DTGNT and WI.

It belongs to the purine/pyrimidine phosphoribosyltransferase family. XGPT subfamily. As to quaternary structure, homotetramer. Mg(2+) serves as cofactor.

The protein localises to the cell inner membrane. It carries out the reaction GMP + diphosphate = guanine + 5-phospho-alpha-D-ribose 1-diphosphate. The enzyme catalyses XMP + diphosphate = xanthine + 5-phospho-alpha-D-ribose 1-diphosphate. The catalysed reaction is IMP + diphosphate = hypoxanthine + 5-phospho-alpha-D-ribose 1-diphosphate. It functions in the pathway purine metabolism; GMP biosynthesis via salvage pathway; GMP from guanine: step 1/1. The protein operates within purine metabolism; XMP biosynthesis via salvage pathway; XMP from xanthine: step 1/1. Its function is as follows. Acts on guanine, xanthine and to a lesser extent hypoxanthine. Functionally, purine salvage pathway enzyme that catalyzes the transfer of the ribosyl-5-phosphate group from 5-phospho-alpha-D-ribose 1-diphosphate (PRPP) to the N9 position of the 6-oxopurines guanine and xanthine to form the corresponding ribonucleotides GMP (guanosine 5'-monophosphate) and XMP (xanthosine 5'-monophosphate), with the release of PPi. To a lesser extent, also acts on hypoxanthine. This is Xanthine-guanine phosphoribosyltransferase from Haemophilus influenzae (strain ATCC 51907 / DSM 11121 / KW20 / Rd).